We begin with the raw amino-acid sequence, 229 residues long: UPF0758 protein Caur_3603 (229 aa).

An MPN domain is found at 105 to 227 (PIRSPADVAT…YVSLRERGLG (123 aa)). Residues His176, His178, and Asp189 each contribute to the Zn(2+) site. The JAMM motif signature appears at 176–189 (HNHPSGEPTPSMED).

The protein belongs to the UPF0758 family.

In Chloroflexus aurantiacus (strain ATCC 29366 / DSM 635 / J-10-fl), this protein is UPF0758 protein Caur_3603.